The following is a 439-amino-acid chain: Xylose isomerase (439 aa).

Catalysis depends on residues histidine 101 and aspartate 104. Mg(2+) is bound by residues glutamate 232, glutamate 268, histidine 271, aspartate 296, aspartate 307, aspartate 309, and aspartate 339.

It belongs to the xylose isomerase family. As to quaternary structure, homotetramer. Mg(2+) serves as cofactor.

The protein localises to the cytoplasm. It catalyses the reaction alpha-D-xylose = alpha-D-xylulofuranose. The chain is Xylose isomerase from Histophilus somni (strain 2336) (Haemophilus somnus).